The following is a 257-amino-acid chain: Adenosylcobinamide-GDP ribazoletransferase (257 aa).

Helical transmembrane passes span 4–24 (AVRG…WWLG), 40–60 (VVGL…QWFF), 64–84 (FVVQ…LLHL), 116–136 (AAVA…AALL), 140–160 (AALA…ALLI), and 193–213 (LFVT…VVAV).

This sequence belongs to the CobS family. Mg(2+) is required as a cofactor.

The protein resides in the cell inner membrane. The enzyme catalyses alpha-ribazole + adenosylcob(III)inamide-GDP = adenosylcob(III)alamin + GMP + H(+). It catalyses the reaction alpha-ribazole 5'-phosphate + adenosylcob(III)inamide-GDP = adenosylcob(III)alamin 5'-phosphate + GMP + H(+). It participates in cofactor biosynthesis; adenosylcobalamin biosynthesis; adenosylcobalamin from cob(II)yrinate a,c-diamide: step 7/7. Its function is as follows. Joins adenosylcobinamide-GDP and alpha-ribazole to generate adenosylcobalamin (Ado-cobalamin). Also synthesizes adenosylcobalamin 5'-phosphate from adenosylcobinamide-GDP and alpha-ribazole 5'-phosphate. In Alkalilimnicola ehrlichii (strain ATCC BAA-1101 / DSM 17681 / MLHE-1), this protein is Adenosylcobinamide-GDP ribazoletransferase.